Here is a 1244-residue protein sequence, read N- to C-terminus: Membrane-associated phosphatidylinositol transfer protein 1 (1244 aa).

T59 carries the post-translational modification Phosphothreonine. Disordered stretches follow at residues 258–331 (KCNT…QSLS) and 339–358 (ARDSENSSEEEFFDAHEGFS). T287 bears the Phosphothreonine; by CDK1 mark. Positions 299-319 (ASPDASFGKQWSSSSRSSYSS) are enriched in low complexity. Phosphoserine is present on residues S300, S304, S319, S326, S329, S342, S345, S346, and S373. S382 bears the Phosphoserine; by CDK1 mark. The tract at residues 581-682 (AGTGSRGSSR…SSEAPDGPSS (102 aa)) is disordered. A phosphoserine mark is found at S593, S600, and S621. Positions 643 to 658 (GSQNSLQAAPATTSSW) are enriched in polar residues. Residues 686 to 880 (LDFKVSGFFL…VAFILRQVIE (195 aa)) form the DDHD domain. S896 bears the Phosphoserine mark. Residues 1206–1244 (QLLRSRGPSQAEREGPGTPPTTLARGKARSISLKLDSEE) are disordered. 2 positions are modified to omega-N-methylarginine: R1211 and R1218. Phosphoserine is present on S1237.

It belongs to the PtdIns transfer protein family. PI transfer class IIA subfamily. Interacts with PIK4CA. Interacts with PTK2B via its C-terminus. Interacts with RHOA. Has higher affinity for the inactive, GDP-bound form of RHOA. The CDK1-phosphorylated form interacts with PLK1. Interacts with VAPB. Phosphorylated on multiple sites by CDK1 at the onset of mitosis. Phosphorylation facilitates dissociation from the Golgi complex and is required for interaction with PLK1. In terms of processing, phosphorylated on threonine residues upon treatment with oleic acid. Post-translationally, phosphorylated on tyrosine residues by PTK2B. As to expression, ubiquitous.

Its subcellular location is the cytoplasm. It is found in the golgi apparatus. It localises to the golgi stack membrane. The protein resides in the endoplasmic reticulum membrane. The protein localises to the lipid droplet. Its subcellular location is the cleavage furrow. It is found in the midbody. The enzyme catalyses a 1,2-diacyl-sn-glycero-3-phospho-(1D-myo-inositol)(in) = a 1,2-diacyl-sn-glycero-3-phospho-(1D-myo-inositol)(out). Functionally, catalyzes the transfer of phosphatidylinositol (PI) between membranes. Binds PI, phosphatidylcholine (PC) and phosphatidic acid (PA) with the binding affinity order of PI &gt; PA &gt; PC. Regulates RHOA activity, and plays a role in cytoskeleton remodeling. Necessary for normal completion of cytokinesis. Plays a role in maintaining normal diacylglycerol levels in the Golgi apparatus. Necessary for maintaining the normal structure of the endoplasmic reticulum and the Golgi apparatus. Required for protein export from the endoplasmic reticulum and the Golgi. Binds calcium ions. This Homo sapiens (Human) protein is Membrane-associated phosphatidylinositol transfer protein 1 (PITPNM1).